A 257-amino-acid polypeptide reads, in one-letter code: Phosphonates import ATP-binding protein PhnC (257 aa).

The 245-residue stretch at 2 to 246 (IEFRNVSKVY…KFAEIYGDVV (245 aa)) folds into the ABC transporter domain. Position 35-42 (35-42 (GLSGAGKS)) interacts with ATP.

This sequence belongs to the ABC transporter superfamily. Phosphonates importer (TC 3.A.1.9.1) family. As to quaternary structure, the complex is composed of two ATP-binding proteins (PhnC), two transmembrane proteins (PhnE) and a solute-binding protein (PhnD).

Its subcellular location is the cell membrane. It catalyses the reaction phosphonate(out) + ATP + H2O = phosphonate(in) + ADP + phosphate + H(+). Functionally, part of the ABC transporter complex PhnCDE involved in phosphonates import. Responsible for energy coupling to the transport system. This chain is Phosphonates import ATP-binding protein PhnC, found in Bacillus anthracis.